A 247-amino-acid polypeptide reads, in one-letter code: Probable chemoreceptor glutamine deamidase CheD (247 aa).

The disordered stretch occupies residues 204-247 (KRPAAPQPARPRIELFGGRGTAPGAGSPSAGSPYAANLSRKQEA). A compositionally biased stretch (low complexity) spans 227 to 239 (GAGSPSAGSPYAA).

Belongs to the CheD family.

It catalyses the reaction L-glutaminyl-[protein] + H2O = L-glutamyl-[protein] + NH4(+). Its function is as follows. Probably deamidates glutamine residues to glutamate on methyl-accepting chemotaxis receptors (MCPs), playing an important role in chemotaxis. This chain is Probable chemoreceptor glutamine deamidase CheD, found in Burkholderia orbicola (strain AU 1054).